A 257-amino-acid polypeptide reads, in one-letter code: Receptor expression-enhancing protein 4 (257 aa).

The next 2 membrane-spanning stretches (helical) occupy residues M1–Y21 and W42–F62. Residues S152 and S194 each carry the phosphoserine modification. The tract at residues V177–S257 is disordered. T196 carries the post-translational modification Phosphothreonine. S202 and S253 each carry phosphoserine.

It belongs to the DP1 family.

Its subcellular location is the endoplasmic reticulum membrane. Functionally, microtubule-binding protein required to ensure proper cell division and nuclear envelope reassembly by sequestering the endoplasmic reticulum away from chromosomes during mitosis. Probably acts by clearing the endoplasmic reticulum membrane from metaphase chromosomes. In Mus musculus (Mouse), this protein is Receptor expression-enhancing protein 4 (Reep4).